The sequence spans 465 residues: tRNA-2-methylthio-N(6)-dimethylallyladenosine synthase (465 aa).

The region spanning 18-136 (RKLYIETYGC…LPNLVGAAEQ (119 aa)) is the MTTase N-terminal domain. Positions 27, 63, 100, 174, 178, and 181 each coordinate [4Fe-4S] cluster. The Radical SAM core domain occupies 160-392 (GGVHINGFVS…IALQNRLSEE (233 aa)). In terms of domain architecture, TRAM spans 395 to 458 (KRDISKTFEV…SATLFGEVVE (64 aa)).

The protein belongs to the methylthiotransferase family. MiaB subfamily. As to quaternary structure, monomer. [4Fe-4S] cluster is required as a cofactor.

It localises to the cytoplasm. It carries out the reaction N(6)-dimethylallyladenosine(37) in tRNA + (sulfur carrier)-SH + AH2 + 2 S-adenosyl-L-methionine = 2-methylsulfanyl-N(6)-dimethylallyladenosine(37) in tRNA + (sulfur carrier)-H + 5'-deoxyadenosine + L-methionine + A + S-adenosyl-L-homocysteine + 2 H(+). Its function is as follows. Catalyzes the methylthiolation of N6-(dimethylallyl)adenosine (i(6)A), leading to the formation of 2-methylthio-N6-(dimethylallyl)adenosine (ms(2)i(6)A) at position 37 in tRNAs that read codons beginning with uridine. This chain is tRNA-2-methylthio-N(6)-dimethylallyladenosine synthase, found in Porphyromonas gingivalis (strain ATCC 33277 / DSM 20709 / CIP 103683 / JCM 12257 / NCTC 11834 / 2561).